The chain runs to 198 residues: MEKFNTHTGLVVPLDVANVDTDQIIPKQFLQKTERVGFGVHLFHDSRYLDHDGTQENPDFVINKPEYKGASILLAGENFGCGSSREHAPWALQEYGFKVIIASSFADIFYGNCINVGLLPIKLTEAEIEQLFKLSPNAQLTLTVDLPNNVVTCGELSFKFSLNEFQQYSLENGVDSVGWTLNKLDTIKAFEEKMPAWQ.

This sequence belongs to the LeuD family. LeuD type 1 subfamily. In terms of assembly, heterodimer of LeuC and LeuD.

The catalysed reaction is (2R,3S)-3-isopropylmalate = (2S)-2-isopropylmalate. Its pathway is amino-acid biosynthesis; L-leucine biosynthesis; L-leucine from 3-methyl-2-oxobutanoate: step 2/4. Its function is as follows. Catalyzes the isomerization between 2-isopropylmalate and 3-isopropylmalate, via the formation of 2-isopropylmaleate. This Colwellia psychrerythraea (strain 34H / ATCC BAA-681) (Vibrio psychroerythus) protein is 3-isopropylmalate dehydratase small subunit.